We begin with the raw amino-acid sequence, 264 residues long: MKTYLQLLEHILQQGVEKSDRTGTGTLSVFGYQMRFDLTKGFPLVTTKKLHTRSIVHELLWFLRGDTNISYLKENGVTIWDEWADNNGDLGPVYGKQWRSWPTADGHTIDQLSDVVQQIKSNPDSRRLIVSAWNVGELDKMALMPCHALFQFYVANNKLSCQLYQRSADVFLGVPFNIASYSLLTHMVAQQCNLDVAEFIWTGGDCHLYLNHLEQAQIQLTREPLPLPSLTIKRKPASLFDYAYEDFEFVNYQSHPAIKAPIAV.

Arg-21 provides a ligand contact to dUMP. Position 51 (His-51) interacts with (6R)-5,10-methylene-5,6,7,8-tetrahydrofolate. 126 to 127 (RR) provides a ligand contact to dUMP. The active-site Nucleophile is the Cys-146. Residues 166–169 (RSAD), Asn-177, and 207–209 (HLY) each bind dUMP. Asp-169 serves as a coordination point for (6R)-5,10-methylene-5,6,7,8-tetrahydrofolate. Residue Ala-263 coordinates (6R)-5,10-methylene-5,6,7,8-tetrahydrofolate.

It belongs to the thymidylate synthase family. Bacterial-type ThyA subfamily. As to quaternary structure, homodimer.

It is found in the cytoplasm. The catalysed reaction is dUMP + (6R)-5,10-methylene-5,6,7,8-tetrahydrofolate = 7,8-dihydrofolate + dTMP. It functions in the pathway pyrimidine metabolism; dTTP biosynthesis. Its function is as follows. Catalyzes the reductive methylation of 2'-deoxyuridine-5'-monophosphate (dUMP) to 2'-deoxythymidine-5'-monophosphate (dTMP) while utilizing 5,10-methylenetetrahydrofolate (mTHF) as the methyl donor and reductant in the reaction, yielding dihydrofolate (DHF) as a by-product. This enzymatic reaction provides an intracellular de novo source of dTMP, an essential precursor for DNA biosynthesis. The polypeptide is Thymidylate synthase (Legionella pneumophila (strain Corby)).